A 334-amino-acid chain; its full sequence is MGSIGSIGKPIEGFLVAAIQFPVPIVNSKKDIENNVQSIIRTLHATKAGYPGVELIIFPEYSTQGLNTAKWLSEEFLLDVGGKETEAYAQACKEAKVYGVFSIMERNPDPNKNPYNTAIIINPKGEIILHYRKLFPWNPIEPWYPGDKGMPVCDGPGGSKLAVCICHDGMIPELAREAAYKGCNVYIRISGYSTQVNDQWILTNRSNAWHNLMYTVSVNLAGYDNVFYYFGEGQICNFDGTTLVQGHRNPWEIVTGEIYPKMADNARLSWGLENNIYNLGHRGYVAKPGGEPDAGLTYIKDLAASKYKLPWEDHMQIKDGSIYGYPTSGGRFGK.

The 247-residue stretch at 14 to 260 (FLVAAIQFPV…WEIVTGEIYP (247 aa)) folds into the CN hydrolase domain. The Proton acceptor role is filled by Glu60. The Proton donor role is filled by Lys133. Catalysis depends on Cys166, which acts as the Nucleophile.

It belongs to the carbon-nitrogen hydrolase superfamily. Aliphatic amidase family.

It carries out the reaction formamide + H2O = formate + NH4(+). Its function is as follows. Is an aliphatic amidase with a restricted substrate specificity, as it only hydrolyzes formamide. This Helicobacter acinonychis (strain Sheeba) protein is Formamidase.